A 423-amino-acid polypeptide reads, in one-letter code: COP9 signalosome complex subunit 3 (423 aa).

A PCI domain is found at asparagine 197–glutamate 365. Residues glutamine 402–serine 423 form a disordered region.

The protein belongs to the CSN3 family. As to quaternary structure, component of the CSN complex, probably composed of cops1, cops2, cops3, cops4, cops5, cops6, cops7, cops8 and cops9.

Its subcellular location is the cytoplasm. It localises to the nucleus. In terms of biological role, component of the COP9 signalosome complex (CSN), a complex involved in various cellular and developmental processes. The CSN complex is an essential regulator of the ubiquitin (Ubl) conjugation pathway by mediating the deneddylation of the cullin subunits of E3 ligase complexes, leading to modify the Ubl ligase activity. The sequence is that of COP9 signalosome complex subunit 3 (cops3) from Danio rerio (Zebrafish).